Here is a 375-residue protein sequence, read N- to C-terminus: All-trans-retinol dehydrogenase [NAD(+)] ADH1B (375 aa).

Ser-2 is modified (N-acetylserine). Ser-23 bears the Phosphoserine mark. Position 35 is a phosphotyrosine (Tyr-35). Residues Cys-47, His-68, Cys-98, Cys-101, Cys-104, Cys-112, and Cys-175 each contribute to the Zn(2+) site. NAD(+)-binding positions include Gly-200–Gly-205, Asp-224, Lys-229, Val-293–Val-295, and Arg-370.

Belongs to the zinc-containing alcohol dehydrogenase family. As to quaternary structure, homodimer or heterodimer of closely related subunits. Requires Zn(2+) as cofactor. In terms of tissue distribution, expressed in liver.

The protein resides in the cytoplasm. It catalyses the reaction all-trans-retinol + NAD(+) = all-trans-retinal + NADH + H(+). The enzyme catalyses all-trans-4-hydroxyretinol + NAD(+) = all-trans-4-hydroxyretinal + NADH + H(+). It carries out the reaction all-trans-4-oxoretinol + NAD(+) = all-trans-4-oxoretinal + NADH + H(+). Functionally, catalyzes the NAD-dependent oxidation of all-trans-retinol and its derivatives such as all-trans-4-hydroxyretinol and may participate in retinoid metabolism. In vitro can also catalyze the NADH-dependent reduction of all-trans-retinal and its derivatives such as all-trans-4-oxoretinal. Catalyzes in the oxidative direction with higher efficiency. Has the same affinity for all-trans-4-hydroxyretinol and all-trans-4-oxoretinal. The protein is All-trans-retinol dehydrogenase [NAD(+)] ADH1B of Papio hamadryas (Hamadryas baboon).